A 64-amino-acid polypeptide reads, in one-letter code: Large ribosomal subunit protein bL35 (64 aa).

This sequence belongs to the bacterial ribosomal protein bL35 family.

The protein is Large ribosomal subunit protein bL35 of Coxiella burnetii (strain RSA 331 / Henzerling II).